The chain runs to 522 residues: Zinc finger protein 892 (522 aa).

Disordered stretches follow at residues 1–22 (MEPEGRGSLFEDSDLLHAGNPK) and 96–124 (AASQKHWETIPESKELTPEKDISEEESAP). Over residues 100–116 (KHWETIPESKELTPEKD) the composition is skewed to basic and acidic residues. 10 consecutive C2H2-type zinc fingers follow at residues 221-243 (WKCNECEKAFSYYSAFVLHQRIH), 249-271 (YECNECGKAFSQSIHLTLHQRIH), 277-299 (YECHECGKAFSHRSALIRHHIIH), 305-327 (YECNECGKAFNQSSYLTQHQRIH), 333-355 (YECNECGKAFSQSTFLTQHQVIH), 361-383 (YKCNECGKAFSDRSGLIQHQRTH), 389-411 (YECNECGKAFGYCSALTQHQRTH), 417-439 (YKCNDCAKAFSDRSALIRHQRTH), 445-467 (YKCKDCGKAFSQSSSLTKHQKTH), and 473-495 (YKCKECGKAFSQSSSLSQHQKTH).

Belongs to the krueppel C2H2-type zinc-finger protein family.

It localises to the nucleus. Its function is as follows. May be involved in transcriptional regulation. The chain is Zinc finger protein 892 from Homo sapiens (Human).